Consider the following 217-residue polypeptide: Enolase-phosphatase E1 (217 aa).

Residues D9 and E11 each coordinate Mg(2+). Substrate is bound by residues 112–113 (SS) and K151. D176 provides a ligand contact to Mg(2+).

Belongs to the HAD-like hydrolase superfamily. MasA/MtnC family. In terms of assembly, monomer. Requires Mg(2+) as cofactor.

The protein localises to the cytoplasm. Its subcellular location is the nucleus. It carries out the reaction 5-methylsulfanyl-2,3-dioxopentyl phosphate + H2O = 1,2-dihydroxy-5-(methylsulfanyl)pent-1-en-3-one + phosphate. Its pathway is amino-acid biosynthesis; L-methionine biosynthesis via salvage pathway; L-methionine from S-methyl-5-thio-alpha-D-ribose 1-phosphate: step 3/6. It functions in the pathway amino-acid biosynthesis; L-methionine biosynthesis via salvage pathway; L-methionine from S-methyl-5-thio-alpha-D-ribose 1-phosphate: step 4/6. Functionally, bifunctional enzyme that catalyzes the enolization of 2,3-diketo-5-methylthiopentyl-1-phosphate (DK-MTP-1-P) into the intermediate 2-hydroxy-3-keto-5-methylthiopentenyl-1-phosphate (HK-MTPenyl-1-P), which is then dephosphorylated to form the acireductone 1,2-dihydroxy-3-keto-5-methylthiopentene (DHK-MTPene). The sequence is that of Enolase-phosphatase E1 from Lachancea thermotolerans (strain ATCC 56472 / CBS 6340 / NRRL Y-8284) (Yeast).